Here is a 170-residue protein sequence, read N- to C-terminus: Putative invertase inhibitor (170 aa).

The first 14 residues, 1–14, serve as a signal peptide directing secretion; that stretch reads MKLSFSLCIFFLIS. Cystine bridges form between Cys22–Cys37 and Cys93–Cys133.

This sequence belongs to the PMEI family. Expressed in pollen (at protein level). Expressed in pollen.

In Platanus orientalis (Oriental plane-tree), this protein is Putative invertase inhibitor.